A 287-amino-acid polypeptide reads, in one-letter code: 2-dehydro-3-deoxyphosphooctonate aldolase (287 aa).

Belongs to the KdsA family.

It is found in the cytoplasm. It catalyses the reaction D-arabinose 5-phosphate + phosphoenolpyruvate + H2O = 3-deoxy-alpha-D-manno-2-octulosonate-8-phosphate + phosphate. It functions in the pathway carbohydrate biosynthesis; 3-deoxy-D-manno-octulosonate biosynthesis; 3-deoxy-D-manno-octulosonate from D-ribulose 5-phosphate: step 2/3. Its pathway is bacterial outer membrane biogenesis; lipopolysaccharide biosynthesis. The chain is 2-dehydro-3-deoxyphosphooctonate aldolase from Leptospira interrogans serogroup Icterohaemorrhagiae serovar copenhageni (strain Fiocruz L1-130).